The sequence spans 317 residues: 4-hydroxy-3-methylbut-2-enyl diphosphate reductase (317 aa).

C12 provides a ligand contact to [4Fe-4S] cluster. Residues H41 and H74 each contribute to the (2E)-4-hydroxy-3-methylbut-2-enyl diphosphate site. Dimethylallyl diphosphate contacts are provided by H41 and H74. Isopentenyl diphosphate-binding residues include H41 and H74. C97 lines the [4Fe-4S] cluster pocket. A (2E)-4-hydroxy-3-methylbut-2-enyl diphosphate-binding site is contributed by H125. Position 125 (H125) interacts with dimethylallyl diphosphate. H125 is an isopentenyl diphosphate binding site. The active-site Proton donor is E127. Residue T168 participates in (2E)-4-hydroxy-3-methylbut-2-enyl diphosphate binding. Position 198 (C198) interacts with [4Fe-4S] cluster. Positions 226, 227, 228, and 270 each coordinate (2E)-4-hydroxy-3-methylbut-2-enyl diphosphate. Residues S226, S227, N228, and S270 each coordinate dimethylallyl diphosphate. Positions 226, 227, 228, and 270 each coordinate isopentenyl diphosphate.

This sequence belongs to the IspH family. Homodimer. Requires [4Fe-4S] cluster as cofactor.

It carries out the reaction isopentenyl diphosphate + 2 oxidized [2Fe-2S]-[ferredoxin] + H2O = (2E)-4-hydroxy-3-methylbut-2-enyl diphosphate + 2 reduced [2Fe-2S]-[ferredoxin] + 2 H(+). The catalysed reaction is dimethylallyl diphosphate + 2 oxidized [2Fe-2S]-[ferredoxin] + H2O = (2E)-4-hydroxy-3-methylbut-2-enyl diphosphate + 2 reduced [2Fe-2S]-[ferredoxin] + 2 H(+). It functions in the pathway isoprenoid biosynthesis; dimethylallyl diphosphate biosynthesis; dimethylallyl diphosphate from (2E)-4-hydroxy-3-methylbutenyl diphosphate: step 1/1. The protein operates within isoprenoid biosynthesis; isopentenyl diphosphate biosynthesis via DXP pathway; isopentenyl diphosphate from 1-deoxy-D-xylulose 5-phosphate: step 6/6. Its function is as follows. Catalyzes the conversion of 1-hydroxy-2-methyl-2-(E)-butenyl 4-diphosphate (HMBPP) into a mixture of isopentenyl diphosphate (IPP) and dimethylallyl diphosphate (DMAPP). Acts in the terminal step of the DOXP/MEP pathway for isoprenoid precursor biosynthesis. The sequence is that of 4-hydroxy-3-methylbut-2-enyl diphosphate reductase from Yersinia pseudotuberculosis serotype IB (strain PB1/+).